The sequence spans 89 residues: UPF0297 protein SEQ_2150 (89 aa).

The protein belongs to the UPF0297 family.

The protein is UPF0297 protein SEQ_2150 of Streptococcus equi subsp. equi (strain 4047).